The primary structure comprises 615 residues: Dihydroxy-acid dehydratase (615 aa).

A Mg(2+)-binding site is contributed by Asp-81. Residue Cys-122 coordinates [2Fe-2S] cluster. Mg(2+)-binding residues include Asp-123 and Lys-124. At Lys-124 the chain carries N6-carboxylysine. [2Fe-2S] cluster is bound at residue Cys-195. Residue Glu-491 coordinates Mg(2+). The active-site Proton acceptor is the Ser-517.

Belongs to the IlvD/Edd family. As to quaternary structure, homodimer. Requires [2Fe-2S] cluster as cofactor. The cofactor is Mg(2+).

The enzyme catalyses (2R)-2,3-dihydroxy-3-methylbutanoate = 3-methyl-2-oxobutanoate + H2O. The catalysed reaction is (2R,3R)-2,3-dihydroxy-3-methylpentanoate = (S)-3-methyl-2-oxopentanoate + H2O. Its pathway is amino-acid biosynthesis; L-isoleucine biosynthesis; L-isoleucine from 2-oxobutanoate: step 3/4. The protein operates within amino-acid biosynthesis; L-valine biosynthesis; L-valine from pyruvate: step 3/4. Functionally, functions in the biosynthesis of branched-chain amino acids. Catalyzes the dehydration of (2R,3R)-2,3-dihydroxy-3-methylpentanoate (2,3-dihydroxy-3-methylvalerate) into 2-oxo-3-methylpentanoate (2-oxo-3-methylvalerate) and of (2R)-2,3-dihydroxy-3-methylbutanoate (2,3-dihydroxyisovalerate) into 2-oxo-3-methylbutanoate (2-oxoisovalerate), the penultimate precursor to L-isoleucine and L-valine, respectively. This Novosphingobium aromaticivorans (strain ATCC 700278 / DSM 12444 / CCUG 56034 / CIP 105152 / NBRC 16084 / F199) protein is Dihydroxy-acid dehydratase.